We begin with the raw amino-acid sequence, 84 residues long: Large ribosomal subunit protein uL29 (84 aa).

This sequence belongs to the universal ribosomal protein uL29 family.

The chain is Large ribosomal subunit protein uL29 from Mycoplasma mobile (strain ATCC 43663 / 163K / NCTC 11711) (Mesomycoplasma mobile).